The following is a 154-amino-acid chain: Ribosome maturation factor RimP (154 aa).

Belongs to the RimP family.

Its subcellular location is the cytoplasm. Required for maturation of 30S ribosomal subunits. The sequence is that of Ribosome maturation factor RimP from Clostridium perfringens (strain ATCC 13124 / DSM 756 / JCM 1290 / NCIMB 6125 / NCTC 8237 / Type A).